Consider the following 245-residue polypeptide: Uridylate kinase (245 aa).

12–15 (KISG) provides a ligand contact to ATP. UMP is bound at residue Gly55. 2 residues coordinate ATP: Gly56 and Arg60. Residues Asp76 and 137–144 (AGAPYLTT) contribute to the UMP site. Positions 164, 171, and 174 each coordinate ATP.

The protein belongs to the UMP kinase family. In terms of assembly, homohexamer.

The protein localises to the cytoplasm. It catalyses the reaction UMP + ATP = UDP + ADP. Its pathway is pyrimidine metabolism; CTP biosynthesis via de novo pathway; UDP from UMP (UMPK route): step 1/1. With respect to regulation, inhibited by UTP. In terms of biological role, catalyzes the reversible phosphorylation of UMP to UDP. This chain is Uridylate kinase, found in Chlamydia trachomatis serovar D (strain ATCC VR-885 / DSM 19411 / UW-3/Cx).